Here is a 116-residue protein sequence, read N- to C-terminus: Cell cycle protein GpsB (116 aa).

The stretch at 32 to 69 forms a coiled coil; it reads LDDVIKDYETYSALVKELREENSRLKQELSKRMQEAPN. Positions 57 to 78 are disordered; it reads KQELSKRMQEAPNSTASQVHQS. The span at 67–78 shows a compositional bias: polar residues; the sequence is APNSTASQVHQS.

Belongs to the GpsB family. In terms of assembly, forms polymers through the coiled coil domains. Interacts with PBP1, MreC and EzrA.

It localises to the cytoplasm. Divisome component that associates with the complex late in its assembly, after the Z-ring is formed, and is dependent on DivIC and PBP2B for its recruitment to the divisome. Together with EzrA, is a key component of the system that regulates PBP1 localization during cell cycle progression. Its main role could be the removal of PBP1 from the cell pole after pole maturation is completed. Also contributes to the recruitment of PBP1 to the division complex. Not essential for septum formation. The chain is Cell cycle protein GpsB from Streptococcus gordonii (strain Challis / ATCC 35105 / BCRC 15272 / CH1 / DL1 / V288).